The chain runs to 274 residues: 2,3,4,5-tetrahydropyridine-2,6-dicarboxylate N-succinyltransferase (274 aa).

This sequence belongs to the transferase hexapeptide repeat family.

The protein localises to the cytoplasm. It carries out the reaction (S)-2,3,4,5-tetrahydrodipicolinate + succinyl-CoA + H2O = (S)-2-succinylamino-6-oxoheptanedioate + CoA. Its pathway is amino-acid biosynthesis; L-lysine biosynthesis via DAP pathway; LL-2,6-diaminopimelate from (S)-tetrahydrodipicolinate (succinylase route): step 1/3. This chain is 2,3,4,5-tetrahydropyridine-2,6-dicarboxylate N-succinyltransferase, found in Salmonella agona (strain SL483).